The following is a 289-amino-acid chain: Acetyl-coenzyme A carboxylase carboxyl transferase subunit beta (289 aa).

Residues 28-289 form the CoA carboxyltransferase N-terminal domain; it reads VMTKCPKCKK…QGGEMAVWQS (262 aa). The Zn(2+) site is built by cysteine 32, cysteine 35, cysteine 51, and cysteine 54. The segment at 32-54 adopts a C4-type zinc-finger fold; the sequence is CPKCKKIMYTKEVLKNLKVCVNC.

The protein belongs to the AccD/PCCB family. As to quaternary structure, acetyl-CoA carboxylase is a heterohexamer composed of biotin carboxyl carrier protein (AccB), biotin carboxylase (AccC) and two subunits each of ACCase subunit alpha (AccA) and ACCase subunit beta (AccD). The cofactor is Zn(2+).

The protein resides in the cytoplasm. It catalyses the reaction N(6)-carboxybiotinyl-L-lysyl-[protein] + acetyl-CoA = N(6)-biotinyl-L-lysyl-[protein] + malonyl-CoA. It functions in the pathway lipid metabolism; malonyl-CoA biosynthesis; malonyl-CoA from acetyl-CoA: step 1/1. Functionally, component of the acetyl coenzyme A carboxylase (ACC) complex. Biotin carboxylase (BC) catalyzes the carboxylation of biotin on its carrier protein (BCCP) and then the CO(2) group is transferred by the transcarboxylase to acetyl-CoA to form malonyl-CoA. The protein is Acetyl-coenzyme A carboxylase carboxyl transferase subunit beta of Bacillus anthracis (strain A0248).